The following is a 204-amino-acid chain: bMERB domain-containing protein 1 (204 aa).

A bMERB domain is found at 3–150 (LKQSLSTHLE…EQEEDKEMAD (148 aa)). Positions 162 to 187 (VTKSPASSRAEKKAEPPPSKPTVAKT) are disordered.

This Pongo abelii (Sumatran orangutan) protein is bMERB domain-containing protein 1 (BMERB1).